A 91-amino-acid chain; its full sequence is MRHIKVNVKGQVQGVGFRYFTQQAATENAIVGWVRNEDDGSVLIEAQGEDKNVDAFLNEVEKGPTKFARVQDMEVKELAEDTELTKFEVKY.

In terms of domain architecture, Acylphosphatase-like spans 3–91; sequence HIKVNVKGQV…TELTKFEVKY (89 aa). Active-site residues include R18 and N36.

It belongs to the acylphosphatase family.

The catalysed reaction is an acyl phosphate + H2O = a carboxylate + phosphate + H(+). This chain is Acylphosphatase (acyP), found in Oceanobacillus iheyensis (strain DSM 14371 / CIP 107618 / JCM 11309 / KCTC 3954 / HTE831).